The primary structure comprises 319 residues: Cytochrome c biogenesis protein CcsA (319 aa).

8 helical membrane-spanning segments follow: residues 15–35 (FSIV…NKIV), 44–64 (GMIL…IFAG), 71–91 (LYES…IPYF), 96–116 (LSAI…SGFF), 141–161 (MILA…LLVI), 223–243 (VISL…VWAN), 258–278 (WAFI…NINL), and 284–304 (AIVA…VNLL).

This sequence belongs to the CcmF/CycK/Ccl1/NrfE/CcsA family. In terms of assembly, may interact with Ccs1.

The protein localises to the plastid. It localises to the chloroplast thylakoid membrane. In terms of biological role, required during biogenesis of c-type cytochromes (cytochrome c6 and cytochrome f) at the step of heme attachment. This Fagopyrum esculentum subsp. ancestrale (Wild buckwheat) protein is Cytochrome c biogenesis protein CcsA.